The primary structure comprises 529 residues: Tyrosine-protein kinase Fgr (529 aa).

The N-myristoyl glycine moiety is linked to residue Gly2. 2 S-palmitoyl cysteine lipidation sites follow: Cys3 and Cys6. The residue at position 34 (Tyr34) is a Phosphotyrosine. In terms of domain architecture, SH3 spans 77-138 (IGVTLFIALY…PSNYVAPVDS (62 aa)). One can recognise an SH2 domain in the interval 144–241 (WYFGKIGRKD…GLCNLLIAPC (98 aa)). Tyr208 bears the Phosphotyrosine mark. Ser218 carries the phosphoserine modification. A Protein kinase domain is found at 263–516 (ITLERRLGTG…YLQSFLEDYF (254 aa)). Residues 269 to 277 (LGTGCFGDV) and Lys291 contribute to the ATP site. Asp382 (proton acceptor) is an active-site residue. Phosphotyrosine is present on Tyr412. Tyr523 is subject to Phosphotyrosine; by SRC.

The protein belongs to the protein kinase superfamily. Tyr protein kinase family. SRC subfamily. Interacts with ITGB1, ITGB2, MS4A2/FCER1B, FCER1G, FCGR2A and/or FCGR2B. Interacts (via SH2 domain) with SYK (tyrosine phosphorylated). Interacts (via SH2 domain) with FLT3 (tyrosine phosphorylated). Interacts with PTK2/FAK1. Interacts (via SH2 domain) with HCLS1 (tyrosine phosphorylated by SYK). Interacts with SIRPA and PTPNS1. Interacts (not phosphorylated on tyrosine residues) with CBL; FGR tyrosine phosphorylation promotes dissociation. Interacts with PIK3R1 and FASLG. Interacts with CLNK. In terms of processing, ubiquitinated. Becomes ubiquitinated in response to ITGB2 signaling; this does not lead to degradation. Phosphorylated. Autophosphorylated on tyrosine residues. Becomes phosphorylated in response to FCGR2A and/or FCGR2B engagement, cell adhesion and signaling by ITGB2. Prior phosphorylation at Tyr-523 by SRC inhibits ulterior autophosphorylation at Tyr-412. In terms of tissue distribution, detected in neutrophils, monocytes and natural killer cells (at protein level). Detected in monocytes and large lymphocytes.

The protein resides in the cell membrane. It is found in the cell projection. It localises to the ruffle membrane. The protein localises to the cytoplasm. Its subcellular location is the cytosol. The protein resides in the cytoskeleton. It is found in the mitochondrion inner membrane. It localises to the mitochondrion intermembrane space. It catalyses the reaction L-tyrosyl-[protein] + ATP = O-phospho-L-tyrosyl-[protein] + ADP + H(+). Its activity is regulated as follows. Activated by autophosphorylation. Prior phosphorylation at Tyr-523 by SRC inhibits ulterior autophosphorylation at Tyr-412. Activated by phorbol myristate acetate, phosphatidic acid and poly-Lys. Binding (via SH2 domain) of HCLS1 that is already phosphorylated by SYK strongly increases kinase activity. Non-receptor tyrosine-protein kinase that transmits signals from cell surface receptors devoid of kinase activity and contributes to the regulation of immune responses, including neutrophil, monocyte, macrophage and mast cell functions, cytoskeleton remodeling in response to extracellular stimuli, phagocytosis, cell adhesion and migration. Promotes mast cell degranulation, release of inflammatory cytokines and IgE-mediated anaphylaxis. Acts downstream of receptors that bind the Fc region of immunoglobulins, such as MS4A2/FCER1B, FCGR2A and/or FCGR2B. Acts downstream of ITGB1 and ITGB2, and regulates actin cytoskeleton reorganization, cell spreading and adhesion. Depending on the context, activates or inhibits cellular responses. Functions as a negative regulator of ITGB2 signaling, phagocytosis and SYK activity in monocytes. Required for normal ITGB1 and ITGB2 signaling, normal cell spreading and adhesion in neutrophils and macrophages. Functions as a positive regulator of cell migration and regulates cytoskeleton reorganization via RAC1 activation. Phosphorylates SYK (in vitro) and promotes SYK-dependent activation of AKT1 and MAP kinase signaling. Phosphorylates PLD2 in antigen-stimulated mast cells, leading to PLD2 activation and the production of the signaling molecules lysophosphatidic acid and diacylglycerol. Promotes activation of PIK3R1. Phosphorylates FASLG, and thereby regulates its ubiquitination and subsequent internalization. Phosphorylates ABL1. Promotes phosphorylation of CBL, CTTN, PIK3R1, PTK2/FAK1, PTK2B/PYK2 and VAV2. Phosphorylates HCLS1 that has already been phosphorylated by SYK, but not unphosphorylated HCLS1. Together with CLNK, it acts as a negative regulator of natural killer cell-activating receptors and inhibits interferon-gamma production. This is Tyrosine-protein kinase Fgr (FGR) from Homo sapiens (Human).